The following is a 21-amino-acid chain: Protein YadW (21 aa).

The sequence is that of Protein YadW from Escherichia coli (strain K12).